The primary structure comprises 335 residues: Cell division protein ZipA (335 aa).

Over 1-4 (MDLN) the chain is Periplasmic. A helical transmembrane segment spans residues 5–25 (AILIILGVIALIILVAHGIWS). The Cytoplasmic segment spans residues 26–335 (NRREKSQYFE…AERDYLARVS (310 aa)).

Belongs to the ZipA family. As to quaternary structure, interacts with FtsZ via their C-terminal domains.

The protein localises to the cell inner membrane. Its function is as follows. Essential cell division protein that stabilizes the FtsZ protofilaments by cross-linking them and that serves as a cytoplasmic membrane anchor for the Z ring. Also required for the recruitment to the septal ring of downstream cell division proteins. The protein is Cell division protein ZipA of Histophilus somni (strain 2336) (Haemophilus somnus).